Reading from the N-terminus, the 874-residue chain is MTENTEKGASVETPQVAGSQTNPPVQEPLALTKIPPIKVKSERPDAEVEAKLRAMNAKIKAEMVTLMRRSNSNELGNNDESGESESSASADDKKNIKPVKSSNEILAELFGVFNAAPPEELLDDNLFKKKKKVKKEKKDKKAKKKKTTKSDGECSDSEAEGKHKHKRKKHKHKDIRVKDKEKDRDRDKSKEKDRDRVTDKSKEKDRDRDRDRDKSKDKFTAAQAPSEKEKEKSESRKRSAVEPSSHSEKRERHEREKHRDWEREREREKEHERERVRSNNSFYNGQREADRLKGSESASTKSRQEQDLSDISLSDEESYLREKASNGRRRAHNSFYDEKEELSVSPKRNVRESNTRRNRKSRSRSRDLGIDKKRLLEIARRNAINMFKQGTMPGVANMTAEVKDKVLVKMRYGGRTIQDLTDFCKKISNGDGLSDLSSEEESDVDKNGNAKVFHHPFQLKEREPIVMHIRNSTALVPAPPRLDEQTKAITMQFPVSSGQTHRNNEVWVPVDPKDSLVPLPSLPPAKQATNMFKETPKNVFAKSIPLQEQQEPAFKPLGGAVVVPPLAATQLPTVPQSVPPTVPKEFAPPAVPFVPEVPIPSTSPVTPMQSASIFPDVTPPSMDVSSIITQRLSAIRRLQENPADSEALKMMYTAQRNMSSWANSKHLPGQFTGSTGAQVMKAHELNSGPQLWVRKDQMTSTKPVTGGMGMALLQKMGWKPGEGLGRCKTGSLQPLLLDVKLDKRGLVSRDDLRPPQMRAPAAQRRNKNMAGPIGAGPCPAVQGAGPGPLASTPLVTQDKHPVCVLNELTSKNKWMPPQYKLRQDIGPAHNRSFLFSVEINGQTFTPDRGSNNKKEAKLNAAALCLRSLGILPPS.

Disordered regions lie at residues 1–45 (MTEN…ERPD), 68–98 (RRSN…NIKP), and 120–368 (ELLD…SRDL). The span at 12 to 24 (ETPQVAGSQTNPP) shows a compositional bias: polar residues. Residues 70-89 (SNSNELGNNDESGESESSAS) show a composition bias toward low complexity. 2 stretches are compositionally biased toward basic residues: residues 128 to 147 (KKKK…KKKT) and 162 to 175 (KHKH…HKDI). 2 stretches are compositionally biased toward basic and acidic residues: residues 176–219 (RVKD…KDKF) and 226–277 (SEKE…ERVR). Positions 705–751 (TGGMGMALLQKMGWKPGEGLGRCKTGSLQPLLLDVKLDKRGLVSRDD) constitute a G-patch domain. The 71-residue stretch at 800-870 (HPVCVLNELT…AALCLRSLGI (71 aa)) folds into the DRBM domain.

As to expression, expressed in ovarian nurse cells (at protein level).

Its subcellular location is the nucleus. Functionally, RNA-binding protein that protects nascent transcripts containing intronic transposable sequences, known as INE-1, from being degraded by DIP1. Modulates DIP1 activity by repressing its sumoylation levels. This ensures that intronic sequences will be degradated only after splicing. In the ovaries, regulates germline stem cells (GSCs) self-renewal by repressing the expression of the GSC differentiation-promoting factor Rga. This Drosophila melanogaster (Fruit fly) protein is Protein Son.